The sequence spans 874 residues: Leucine--tRNA ligase (874 aa).

Positions 47–57 (PYPSGKLHMGH) match the 'HIGH' region motif. The 'KMSKS' region motif lies at 636-640 (KMSKS). An ATP-binding site is contributed by Lys639.

It belongs to the class-I aminoacyl-tRNA synthetase family.

Its subcellular location is the cytoplasm. It catalyses the reaction tRNA(Leu) + L-leucine + ATP = L-leucyl-tRNA(Leu) + AMP + diphosphate. This chain is Leucine--tRNA ligase, found in Acinetobacter baumannii (strain SDF).